A 670-amino-acid polypeptide reads, in one-letter code: Penicillin-binding protein activator LpoA (670 aa).

A signal peptide spans 1–26; sequence MLPSKVVHRKAVRTVPLLLAALIFAG. Residue C27 is the site of N-palmitoyl cysteine attachment. A lipid anchor (S-diacylglycerol cysteine) is attached at C27.

The protein belongs to the LpoA family. Interacts with PBP1a.

It is found in the cell outer membrane. Regulator of peptidoglycan synthesis that is essential for the function of penicillin-binding protein 1A (PBP1a). This Erwinia tasmaniensis (strain DSM 17950 / CFBP 7177 / CIP 109463 / NCPPB 4357 / Et1/99) protein is Penicillin-binding protein activator LpoA.